Reading from the N-terminus, the 105-residue chain is Small ribosomal subunit protein uS10 (105 aa).

Belongs to the universal ribosomal protein uS10 family. Part of the 30S ribosomal subunit.

Its function is as follows. Involved in the binding of tRNA to the ribosomes. This is Small ribosomal subunit protein uS10 from Solidesulfovibrio magneticus (strain ATCC 700980 / DSM 13731 / RS-1) (Desulfovibrio magneticus).